Here is a 746-residue protein sequence, read N- to C-terminus: Lysine-specific histone demethylase 1 homolog 2 (746 aa).

A disordered region spans residues 1-26; it reads MNSPASDETAPRRNRRKVSRKNYDEN. The SWIRM domain maps to 51 to 152; the sequence is EKETETEALI…FGVSPLFAPY (102 aa). Residues Glu189, Arg191, Arg197, and Glu569 each contribute to the FAD site.

It belongs to the flavin monoamine oxidase family. FAD serves as cofactor. In terms of tissue distribution, expressed in the shoot and root apical regions of young seedlings. Expressed in inflorescences.

Probable histone demethylase that reduces the levels of histone H3 'Lys-4' methylation in chromatin of the floral repressor FLOWERING LOCUS C (FLC) and the sporophytically silenced floral repressor FWA. Seems to act in partial redundancy with FLOWERING LOCUS D (FLD) to repress FLC expression. Required for cytosine methylation of FWA. Controls primary seed dormancy by regulating DOG1 and abscisic acid signaling-related genes. This chain is Lysine-specific histone demethylase 1 homolog 2, found in Arabidopsis thaliana (Mouse-ear cress).